Consider the following 818-residue polypeptide: Patatin-like phospholipase domain-containing protein YALI0D16379g (818 aa).

2 disordered regions span residues 1 to 50 and 154 to 178; these read MLKL…RDVN and EEKRRRGKSKKDKEGSEGDKTKTKE. A compositionally biased stretch (polar residues) spans 22-38; the sequence is SQQLTLDSPEGSETSSR. A compositionally biased stretch (basic and acidic residues) spans 164–178; that stretch reads KDKEGSEGDKTKTKE. The helical transmembrane segment at 223-243 threads the bilayer; that stretch reads WPALFFIGMWLLFLTTIYASV. Residues 398–589 form the PNPLA domain; it reads LCLSGGGCFA…RTDIPVDALN (192 aa). The short motif at 429–433 is the GXSXG element; that stretch reads GTSGG. Serine 431 acts as the Nucleophile in catalysis. Aspartate 576 (proton acceptor) is an active-site residue. The tract at residues 781–805 is disordered; that stretch reads AGTDISSSNSDYDHEPQWEMDEGDS.

It belongs to the PLPL family.

Its subcellular location is the membrane. Its function is as follows. Probable lipid hydrolase. In Yarrowia lipolytica (strain CLIB 122 / E 150) (Yeast), this protein is Patatin-like phospholipase domain-containing protein YALI0D16379g.